Here is a 279-residue protein sequence, read N- to C-terminus: Calcium-binding protein 4 (279 aa).

A compositionally biased stretch (basic and acidic residues) spans M1 to P12. A disordered region spans residues M1–R114. S42 carries the post-translational modification Phosphoserine. A compositionally biased stretch (polar residues) spans G55–M65. EF-hand domains lie at E133–M168, G187–E204, L210–E245, and L247–H279. Ca(2+)-binding residues include D146, D148, D150, Y152, and D157. Ca(2+)-binding residues include D223, D225, D227, R229, E234, D260, N262, D264, T266, and E271.

In terms of assembly, interacts with CACNA1F and CACNA1D (via IQ domain) in a calcium independent manner. Interacts (via N-terminus) with UNC119. Post-translationally, phosphorylated. Phosphorylation levels change with the light conditions and regulate the activity. In terms of tissue distribution, expressed in the retina.

It is found in the cytoplasm. The protein resides in the presynapse. Functionally, may play a role in normal synaptic function, probably through regulation of Ca(2+) influx and neurotransmitter release in photoreceptor synaptic terminals and in auditory transmission. Modulator of CACNA1F, shifting the activation range to more hyperpolarized voltages. The protein is Calcium-binding protein 4 (CABP4) of Bos taurus (Bovine).